The following is a 662-amino-acid chain: MPAVDKLLLEEALQDSPQARSLLSVFEEDAGTLTDYTNQLLQAMQRVYGAQNEMCLATQQLSRQLLAYEKQNFALGKGDEEVISTLHYFSKVMDELNGLHTELAKQLADTMVLPVIQFREKDLTEVSTLKDLFGLASSEHDLSMAKYSRLPKKKENEKAKTEIVKEVAAARRKQHLSSLQYYCALNALQYRKRAAMMEPLIGFAHGQINFFKRGAEMFSKSMDGFLSSVKDMVQSIQVELEAEADKMRVSQQELLSVSESVYTPDIDVATAQINRNLIQKTGYLNLRNKTGLVTTTWERLYFFTQGGNLMCQPRGAVAGGLIQDLDNCSVMAVDCEDRRYCFQISTPSGKPGIILQAESRKEYEEWICAVNNISRQIYLTDNPEAVAIKLNQTALQAVTPITSFGKKQESSCSSQNIKNSDIEDDNIVPKATASIPETEELIAPGTPIQFDIVLPATEFLDQNRGGRRTNPFGETEDGSFPEAEDSLLQQMFIVRFLGSMAVKTDSTAEVIYEAMRQVLAARAIHNIFRMTESHLMVTSQTLRLIDPQTQVSRACFELTSVTQFAAHQENKRLVGFVIRVPESTGEESLSTYIFESNSEGEKICYAINLGKEIIEVQKDPEALARLMLSVPLTNDGKYVLLNDQADDTGGSPSENRGAESEA.

Residues 1–428 form a required for RAB5A binding region; that stretch reads MPAVDKLLLE…NSDIEDDNIV (428 aa). The BAR domain maps to 3–268; it reads AVDKLLLEEA…ESVYTPDIDV (266 aa). The region spanning 277-375 is the PH domain; sequence LIQKTGYLNL…WICAVNNISR (99 aa). The 150-residue stretch at 486–635 folds into the PID domain; the sequence is SLLQQMFIVR…LMLSVPLTND (150 aa). Residues 642–662 form a disordered region; sequence NDQADDTGGSPSENRGAESEA.

As to quaternary structure, homodimer. Homotetramer. Binds RAB5A/Rab5 through an N-terminal domain. This interaction is essential for its recruitment to endosomal membranes as well as its role in cell proliferation. Binds subunits of the NuRD/MeCP1 complex. Interacts with FSHR; interaction is independent of follicle stimulating hormone stimulation. Interacts with APPL1; the interaction is decreased by adiponectin in a time-dependent manner. Forms a complex comprising APPL1, RUVBL2, CTNNB1, HDAC1 and HDAC2; interaction reduces interaction between CTNNB1, HDAC1, HDAC2 and RUVBL2 leading to the decrease of deacetylase activity of this complex; affects the recruitment of repressive complexes to the Wnt target genes. Interacts (via BAR domain) with TBC1D1; interaction is dependent of TBC1D1 phosphorylation at 'Ser-235'; interaction diminishes the phosphorylation of TBC1D1 at 'Thr-596', resulting in inhibition of SLC2A4 translocation and glucose uptake. Interacts with ANXA2; targets APPL2 to endosomes and acting in parallel to RAB5A. Interacts with RAB31 (in GTP-bound form); interaction contributes to or enhances recruitment of APPL2 to the phagosomes; interaction enhances Fc-gamma receptor-mediated phagocytosis through PI3K/Akt signaling in macrophages. Interacts with PIK3R1; forms a complex with PIK3R1 and APPL1. Interacts (via BAR domain) with ADIPOR1; hinders the accessibility of APPL1 to ADIPOR1; negatively regulates adiponectin signaling; ADIPOQ dissociates this interaction and facilitates the recruitment of APPL1 to ADIPOR1. Interacts (via BAR domain) with ADIPOR2; ADIPOQ dissociates this interaction. In terms of tissue distribution, expressed in insulin-target tissues including skeletal muscle, liver, fat, and brain. Highly expressed in kidney and pancreas. Abundantly expressed in the ventromedial hypothalamus (VMH), barely detectable in the arcuate nucleus (ARC) and paraventricular nucleus (PVN) of the hypothalamus. Also expressed in pancreatic beta-cells.

The protein resides in the early endosome membrane. It localises to the nucleus. The protein localises to the cell membrane. Its subcellular location is the endosome membrane. It is found in the cytoplasm. The protein resides in the cytoplasmic vesicle. It localises to the phagosome. The protein localises to the cell projection. Its subcellular location is the ruffle. It is found in the ruffle membrane. The protein resides in the phagosome membrane. Functionally, multifunctional adapter protein that binds to various membrane receptors, nuclear factors and signaling proteins to regulate many processes, such as cell proliferation, immune response, endosomal trafficking and cell metabolism. Regulates signaling pathway leading to cell proliferation through interaction with RAB5A and subunits of the NuRD/MeCP1 complex. Plays a role in immune response by modulating phagocytosis, inflammatory and innate immune responses. In macrophages, enhances Fc-gamma receptor-mediated phagocytosis through interaction with RAB31 leading to activation of PI3K/Akt signaling. In response to LPS, modulates inflammatory responses by playing a key role on the regulation of TLR4 signaling and in the nuclear translocation of RELA/NF-kappa-B p65 and the secretion of pro- and anti-inflammatory cytokines. Also functions as a negative regulator of innate immune response via inhibition of AKT1 signaling pathway by forming a complex with APPL1 and PIK3R1. Plays a role in endosomal trafficking of TGFBR1 from the endosomes to the nucleus. Plays a role in cell metabolism by regulating adiponectin and insulin signaling pathways and adaptative thermogenesis. In muscle, negatively regulates adiponectin-simulated glucose uptake and fatty acid oxidation by inhibiting adiponectin signaling pathway through APPL1 sequestration thereby antagonizing APPL1 action. In muscles, negatively regulates insulin-induced plasma membrane recruitment of GLUT4 and glucose uptake through interaction with TBC1D1. Plays a role in cold and diet-induced adaptive thermogenesis by activating ventromedial hypothalamus (VMH) neurons throught AMPK inhibition which enhances sympathetic outflow to subcutaneous white adipose tissue (sWAT), sWAT beiging and cold tolerance. Also plays a role in other signaling pathways namely Wnt/beta-catenin, HGF and glucocorticoid receptor signaling. Positive regulator of beta-catenin/TCF-dependent transcription through direct interaction with RUVBL2/reptin resulting in the relief of RUVBL2-mediated repression of beta-catenin/TCF target genes by modulating the interactions within the beta-catenin-reptin-HDAC complex. May affect adult neurogenesis in hippocampus and olfactory system via regulating the sensitivity of glucocorticoid receptor. Required for fibroblast migration through HGF cell signaling. This chain is DCC-interacting protein 13-beta, found in Mus musculus (Mouse).